A 441-amino-acid chain; its full sequence is GTPase Der (441 aa).

EngA-type G domains follow at residues 3 to 167 and 176 to 351; these read PLIA…PKGS and TKIA…EQFA. Residues 9–16, 56–60, 119–122, 182–189, 229–233, and 294–297 each bind GTP; these read GRPNVGKS, DTGGF, NKID, DTAGI, and NKWD. In terms of domain architecture, KH-like spans 352-436; the sequence is RRITTSDLNR…PMRLLFKGRE (85 aa).

This sequence belongs to the TRAFAC class TrmE-Era-EngA-EngB-Septin-like GTPase superfamily. EngA (Der) GTPase family. In terms of assembly, associates with the 50S ribosomal subunit.

In terms of biological role, GTPase that plays an essential role in the late steps of ribosome biogenesis. The chain is GTPase Der from Geotalea uraniireducens (strain Rf4) (Geobacter uraniireducens).